We begin with the raw amino-acid sequence, 55 residues long: Large ribosomal subunit protein bL33B (55 aa).

This sequence belongs to the bacterial ribosomal protein bL33 family.

In Mycolicibacterium paratuberculosis (strain ATCC BAA-968 / K-10) (Mycobacterium paratuberculosis), this protein is Large ribosomal subunit protein bL33B.